Here is a 370-residue protein sequence, read N- to C-terminus: Quinolinate synthase (370 aa).

Residues histidine 62 and serine 83 each coordinate iminosuccinate. Residue cysteine 128 participates in [4Fe-4S] cluster binding. Residues 154–156 and serine 171 contribute to the iminosuccinate site; that span reads YAN. [4Fe-4S] cluster is bound at residue cysteine 215. Residues 241-243 and threonine 258 contribute to the iminosuccinate site; that span reads HPE. Cysteine 312 serves as a coordination point for [4Fe-4S] cluster.

Belongs to the quinolinate synthase family. Type 1 subfamily. The cofactor is [4Fe-4S] cluster.

Its subcellular location is the cytoplasm. The enzyme catalyses iminosuccinate + dihydroxyacetone phosphate = quinolinate + phosphate + 2 H2O + H(+). Its pathway is cofactor biosynthesis; NAD(+) biosynthesis; quinolinate from iminoaspartate: step 1/1. Its function is as follows. Catalyzes the condensation of iminoaspartate with dihydroxyacetone phosphate to form quinolinate. The polypeptide is Quinolinate synthase (Neisseria meningitidis serogroup A / serotype 4A (strain DSM 15465 / Z2491)).